The chain runs to 161 residues: MSEQDGSPIRKYFLFPGATHVDAEECEITTVLGSCVAVCLWDQRHGGGGMNHFMLPLWNGEGLATPKYGSIAMERLLEQVLAIGARKEHLVAKVFGGANLLSTSSAACPIGERNIELAMTQLEEWRIAVVATDLGGRVGRKIIMNTMTGVVLLGRGKQQNQ.

The protein belongs to the CheD family.

The enzyme catalyses L-glutaminyl-[protein] + H2O = L-glutamyl-[protein] + NH4(+). Functionally, probably deamidates glutamine residues to glutamate on methyl-accepting chemotaxis receptors (MCPs), playing an important role in chemotaxis. This is Probable chemoreceptor glutamine deamidase CheD from Trichlorobacter lovleyi (strain ATCC BAA-1151 / DSM 17278 / SZ) (Geobacter lovleyi).